A 943-amino-acid chain; its full sequence is Isoleucine--tRNA ligase (943 aa).

Residues 58–68 (PYANGSIHIGH) carry the 'HIGH' region motif. E567 provides a ligand contact to L-isoleucyl-5'-AMP. A 'KMSKS' region motif is present at residues 608-612 (KMSKS). K611 provides a ligand contact to ATP. C906, C909, C926, and C929 together coordinate Zn(2+).

This sequence belongs to the class-I aminoacyl-tRNA synthetase family. IleS type 1 subfamily. As to quaternary structure, monomer. Requires Zn(2+) as cofactor.

The protein resides in the cytoplasm. The enzyme catalyses tRNA(Ile) + L-isoleucine + ATP = L-isoleucyl-tRNA(Ile) + AMP + diphosphate. Catalyzes the attachment of isoleucine to tRNA(Ile). As IleRS can inadvertently accommodate and process structurally similar amino acids such as valine, to avoid such errors it has two additional distinct tRNA(Ile)-dependent editing activities. One activity is designated as 'pretransfer' editing and involves the hydrolysis of activated Val-AMP. The other activity is designated 'posttransfer' editing and involves deacylation of mischarged Val-tRNA(Ile). This Pseudomonas paraeruginosa (strain DSM 24068 / PA7) (Pseudomonas aeruginosa (strain PA7)) protein is Isoleucine--tRNA ligase.